We begin with the raw amino-acid sequence, 96 residues long: UPF0235 protein VV1_1522 (96 aa).

It belongs to the UPF0235 family.

The chain is UPF0235 protein VV1_1522 from Vibrio vulnificus (strain CMCP6).